The primary structure comprises 1217 residues: MATLYVSPHLDDFRSLLALVAAEYCGNAKQQSQVWQWLSFADNELTPVSCAVVFPLMGMTGLDKKIQQNSRVELMRVLKVLDQALEPRTFLVGESITLADMAVAMAVLLPFKYVLEPSDRNVLMNVTRWFTTCINQPEFLKVLGKISLCEKMVPVTAKTSTEEAAAVHPDAAALNGPPKTEAQLKKEAKKREKLEKFQQKKEMEAKKKMQPVAEKKAKPEKRELGVITYDIPTPSGEKKDVVSPLPDSYSPQYVEAAWYPWWEKQGFFKPEFGRKSIGEQNPRGIFMMCIPPPNVTGSLHLGHALTNAIQDTLTRWHRMRGETTLWNPGCDHAGIATQVVVEKKLMREKGTSRHDLGREKFIEEVWKWKNEKGDRIYHQLKKLGSSLDWDRACFTMDPKLSYAVQEAFIRMHDEGVIYRSKRLVNWSCSLNSAISDIEVDKNELSGRTLLPVPGYKEKVEFGVLVSFAYKVDGSDEEVVVATTRIETMLGDTAVAVHPSDSRYQHLKGKTVLHPFCDRKIPVVFDDFVDMSFGTGAVKITPAHDHNDYEVGVRHNLAFINILDENGFVINVPPPFLGMKRFDARKAVLQALKDRDQFKEIKDNPMVVPVCSRSKDIVEPLMKPQWYVSCSDMGKQAADAVREGRLKIIPDHHSQTWFNWMDNIRDWCISRQLWWGHRIPAYFITVSDPSVKPGEDMDGHYRVSGRTPEEAREKAAKRFNVSPDKIALRQDEDVLDTWFSSGINPFSILGWPNETEDLNVFYPGTLLETGHDILFFWVARMVMMGLKLTGKLPFKEVYHCAVVRDAHGRKMSKSLGNVIDPLDDHIGIALEGLHAQLMDTNLDPLEVEKPKKVQKADYPNCIPECGTDALRFALCAYTSQGRDINLDVNRILGYRHFCNKLWNAVKFAMRTLGDQFVPADTSPAEREESVSDRWILSRLSTAVAQCDAAFRTYDFPAITTAIYNFWLYELCDVYLESVKPVFIKAKEDGSCERPAAVCRQTLYTCLEVGLRLLAPLMPFVTEELYQRLPRRRPQSDPPSICVTPYPDAAEFCWQCEDVDRDIDFIMGVVRTIRSLRSDYKLTKTAADCYLQCTDAATVSLVQKYSLQIQTLSYSQAIVPLMAPQPAPEGCAVAIASDRCTVNMMLKGLIDVEKEVPKLMGKKTDLEKQIEKLSEKISKGDYKEKVPVKVQEQDTEKLRQSQTELEKVKEAMDNFQKMM.

Residues 27-155 (NAKQQSQVWQ…ISLCEKMVPV (129 aa)) form the GST C-terminal domain. The 'HIGH' region motif lies at 293-303 (PNVTGSLHLGH). The short motif at 809–813 (KMSKS) is the 'KMSKS' region element. Lys812 is a binding site for ATP.

This sequence belongs to the class-I aminoacyl-tRNA synthetase family.

It carries out the reaction tRNA(Val) + L-valine + ATP = L-valyl-tRNA(Val) + AMP + diphosphate. This Takifugu rubripes (Japanese pufferfish) protein is Valine--tRNA ligase (vars1).